A 103-amino-acid chain; its full sequence is Large ribosomal subunit protein bL21 (103 aa).

It belongs to the bacterial ribosomal protein bL21 family. Part of the 50S ribosomal subunit. Contacts protein L20.

Its function is as follows. This protein binds to 23S rRNA in the presence of protein L20. The chain is Large ribosomal subunit protein bL21 from Salmonella agona (strain SL483).